The primary structure comprises 431 residues: MLRQETAPLVCKFGGTSVGTAQSIRRVCEIIQEERPSFVVVSAVAGVTDWLEEFCRLPKGKRAALTEKIRERHESIAKELGIEVSLAIFWEILEHFEDVEELFSEDQARILAIGEDLSSTLICSYCCTYVLPLKRLEARQVILTDSQFLRAVPDLALMQTAWGELALQEDTIYLMQGFLGATSSGKTTVLGRGGSDFSASLIGELCKARELRIYTDVCGVHTADPKILKDTQLIDSLTFEEMQELASSGAKVLHQDMLKPCVRAKVPIFVTSTFNVTKEGTWICASLNESTEGPVIKALSLKSNQALWFVEYNSPLVRLEDVLGCVRSLGFVPGVVMAQSLGVYFTIDWEEYPQTITKALEAFGTVSCEGPLSLVALVGAKLASWSMSRVFEALHRTPVLCWSQTDTVINLIINKDFGVAVTELLHDCLFK.

It belongs to the aspartokinase family.

The catalysed reaction is L-aspartate + ATP = 4-phospho-L-aspartate + ADP. The protein operates within amino-acid biosynthesis; L-lysine biosynthesis via DAP pathway; (S)-tetrahydrodipicolinate from L-aspartate: step 1/4. It participates in amino-acid biosynthesis; L-methionine biosynthesis via de novo pathway; L-homoserine from L-aspartate: step 1/3. It functions in the pathway amino-acid biosynthesis; L-threonine biosynthesis; L-threonine from L-aspartate: step 1/5. The chain is Aspartokinase (lysC) from Chlamydia trachomatis serovar D (strain ATCC VR-885 / DSM 19411 / UW-3/Cx).